A 363-amino-acid chain; its full sequence is U-box domain-containing protein 62 (363 aa).

The interval 74–117 (KPIIGNPNDSGGSDGEDDVDVEEEDEDDDLDGNEGDIGMNKDAG) is disordered. The segment covering 87 to 107 (DGEDDVDVEEEDEDDDLDGNE) has biased composition (acidic residues). The region spanning 181–253 (SLRTILSDPT…QAFCREENSQ (73 aa)) is the U-box domain. The interval 343–363 (AKAPEDPSAKATPNKMVSNWL) is disordered.

It carries out the reaction S-ubiquitinyl-[E2 ubiquitin-conjugating enzyme]-L-cysteine + [acceptor protein]-L-lysine = [E2 ubiquitin-conjugating enzyme]-L-cysteine + N(6)-ubiquitinyl-[acceptor protein]-L-lysine.. It functions in the pathway protein modification; protein ubiquitination. Functions as an E3 ubiquitin ligase. This Arabidopsis thaliana (Mouse-ear cress) protein is U-box domain-containing protein 62 (PUB62).